The following is a 283-amino-acid chain: Phosphatidylserine decarboxylase proenzyme (283 aa).

Active-site charge relay system; for autoendoproteolytic cleavage activity residues include Asp-89, His-146, and Ser-249. Ser-249 (schiff-base intermediate with substrate; via pyruvic acid; for decarboxylase activity) is an active-site residue. At Ser-249 the chain carries Pyruvic acid (Ser); by autocatalysis.

This sequence belongs to the phosphatidylserine decarboxylase family. PSD-B subfamily. Prokaryotic type I sub-subfamily. As to quaternary structure, heterodimer of a large membrane-associated beta subunit and a small pyruvoyl-containing alpha subunit. The cofactor is pyruvate. Is synthesized initially as an inactive proenzyme. Formation of the active enzyme involves a self-maturation process in which the active site pyruvoyl group is generated from an internal serine residue via an autocatalytic post-translational modification. Two non-identical subunits are generated from the proenzyme in this reaction, and the pyruvate is formed at the N-terminus of the alpha chain, which is derived from the carboxyl end of the proenzyme. The autoendoproteolytic cleavage occurs by a canonical serine protease mechanism, in which the side chain hydroxyl group of the serine supplies its oxygen atom to form the C-terminus of the beta chain, while the remainder of the serine residue undergoes an oxidative deamination to produce ammonia and the pyruvoyl prosthetic group on the alpha chain. During this reaction, the Ser that is part of the protease active site of the proenzyme becomes the pyruvoyl prosthetic group, which constitutes an essential element of the active site of the mature decarboxylase.

The protein resides in the cell membrane. It carries out the reaction a 1,2-diacyl-sn-glycero-3-phospho-L-serine + H(+) = a 1,2-diacyl-sn-glycero-3-phosphoethanolamine + CO2. The protein operates within phospholipid metabolism; phosphatidylethanolamine biosynthesis; phosphatidylethanolamine from CDP-diacylglycerol: step 2/2. In terms of biological role, catalyzes the formation of phosphatidylethanolamine (PtdEtn) from phosphatidylserine (PtdSer). This Legionella pneumophila (strain Lens) protein is Phosphatidylserine decarboxylase proenzyme.